Consider the following 284-residue polypeptide: 4-diphosphocytidyl-2-C-methyl-D-erythritol kinase (284 aa).

Residue Lys-14 is part of the active site. Residue 98–108 (PMGGGIGGGSS) participates in ATP binding. Residue Asp-140 is part of the active site.

It belongs to the GHMP kinase family. IspE subfamily.

The catalysed reaction is 4-CDP-2-C-methyl-D-erythritol + ATP = 4-CDP-2-C-methyl-D-erythritol 2-phosphate + ADP + H(+). Its pathway is isoprenoid biosynthesis; isopentenyl diphosphate biosynthesis via DXP pathway; isopentenyl diphosphate from 1-deoxy-D-xylulose 5-phosphate: step 3/6. Its function is as follows. Catalyzes the phosphorylation of the position 2 hydroxy group of 4-diphosphocytidyl-2C-methyl-D-erythritol. This chain is 4-diphosphocytidyl-2-C-methyl-D-erythritol kinase, found in Shewanella loihica (strain ATCC BAA-1088 / PV-4).